The primary structure comprises 81 residues: MAVKIRLKRMGQKKAPFYRVIVADSRSPRDGKFIAEIGTYDPTQEPSAFNVDEEAAKKWLADGAQPTETINRLFKKAGIVK.

The protein belongs to the bacterial ribosomal protein bS16 family.

This is Small ribosomal subunit protein bS16 from Lachnoclostridium phytofermentans (strain ATCC 700394 / DSM 18823 / ISDg) (Clostridium phytofermentans).